Here is a 103-residue protein sequence, read N- to C-terminus: Large ribosomal subunit protein bL21 (103 aa).

Belongs to the bacterial ribosomal protein bL21 family. In terms of assembly, part of the 50S ribosomal subunit. Contacts protein L20.

This protein binds to 23S rRNA in the presence of protein L20. The chain is Large ribosomal subunit protein bL21 from Variovorax paradoxus (strain S110).